Reading from the N-terminus, the 638-residue chain is DNA mismatch repair protein MutL (638 aa).

A disordered region spans residues 404 to 433 (FGTQTNAFGSMATPRDNSRGNYSAGESRQR).

This sequence belongs to the DNA mismatch repair MutL/HexB family.

Functionally, this protein is involved in the repair of mismatches in DNA. It is required for dam-dependent methyl-directed DNA mismatch repair. May act as a 'molecular matchmaker', a protein that promotes the formation of a stable complex between two or more DNA-binding proteins in an ATP-dependent manner without itself being part of a final effector complex. The chain is DNA mismatch repair protein MutL from Shewanella baltica (strain OS195).